The following is a 305-amino-acid chain: Glycine--tRNA ligase alpha subunit (305 aa).

The protein belongs to the class-II aminoacyl-tRNA synthetase family. In terms of assembly, tetramer of two alpha and two beta subunits.

The protein localises to the cytoplasm. It carries out the reaction tRNA(Gly) + glycine + ATP = glycyl-tRNA(Gly) + AMP + diphosphate. This is Glycine--tRNA ligase alpha subunit from Streptococcus pneumoniae serotype 19F (strain G54).